Here is a 910-residue protein sequence, read N- to C-terminus: Protein CHROMATIN REMODELING 25 (910 aa).

2 stretches are compositionally biased toward acidic residues: residues 1–18 (MEEEDEEILSSSDCDDSS) and 26–39 (QDSEGENDNPECED). Positions 1–39 (MEEEDEEILSSSDCDDSSDSYKDDSQDSEGENDNPECED) are disordered. Positions 198 to 371 (LHGSANINGC…FAMVNFTNPG (174 aa)) constitute a Helicase ATP-binding domain. An ATP-binding site is contributed by 211–218 (DDMGLGKT). Residues 322 to 325 (DEAH) carry the DEAH box motif. The stretch at 396–417 (TEEEKNLAADRSAELSSKVNQF) forms a coiled coil. The Helicase C-terminal domain occupies 538 to 696 (VLSRLLANLR…QTDNSTRQGN (159 aa)). The segment at 828 to 861 (VSPKTVESEEHNRNQPVNKRAFNKPQQRPREPLQ) is disordered.

The protein belongs to the SNF2/RAD54 helicase family. As to quaternary structure, interacts with RAD51. Binds to the geminivirus mungbean yellow mosaic virus (MYMV) and to the tomato leaf curl virus (ToLCV) replication-associated proteins. Expressed ubiquitously, with the highest levels of expression in flower buds. Present in flower buds (at protein level).

Its subcellular location is the nucleus. Functionally, dissociates RAD51 from nucleoprotein filaments formed on dsDNA. Could be involved in the turnover of RAD51 protein-dsDNA filaments. Addition of RAD54 overcomes inhibition of DNA strand exchange by RAD51 bound to substrate dsDNA. Species preference in the RAD51 dissociation and DNA strand exchange assays underlines the importance of specific RAD54-RAD51 interactions. RAD51 is unable to release dsDNA upon ATP hydrolysis, leaving it stuck on the heteroduplex DNA product after DNA strand exchange. Involved in DNA repair and mitotic recombination. Functions in the homologous recombinational DNA repair (RAD52) pathway. Required for synthesis-dependent strand annealing (SDSA) during double-strand break repair. In terms of biological role, facilitates geminiviral replication (e.g. geminivirus mungbean yellow mosaic virus (MYMV) and tomato leaf curl virus (ToLCV)). This chain is Protein CHROMATIN REMODELING 25 (CHR25), found in Arabidopsis thaliana (Mouse-ear cress).